We begin with the raw amino-acid sequence, 513 residues long: Protein phosphatase 1H (513 aa).

The residue at position 7 (S7) is a Phosphoserine. The 430-residue stretch at 77-506 (ATGYAEVINA…DDISVYVIPL (430 aa)) folds into the PPM-type phosphatase domain. The segment at 110–133 (ITSTPNRNSKRRSSLPNGEGLQLK) is disordered. A Phosphothreonine modification is found at T113. Phosphoserine occurs at positions 123 and 210. R212 is modified (omega-N-methylarginine). S220 is subject to Phosphoserine. A Phosphothreonine modification is found at T223. S421 is modified (phosphoserine).

This sequence belongs to the PP2C family.

The protein localises to the nucleus. It localises to the cytoplasm. It catalyses the reaction O-phospho-L-seryl-[protein] + H2O = L-seryl-[protein] + phosphate. It carries out the reaction O-phospho-L-threonyl-[protein] + H2O = L-threonyl-[protein] + phosphate. In terms of biological role, dephosphorylates CDKN1B at 'Thr-187', thus removing a signal for proteasomal degradation. The sequence is that of Protein phosphatase 1H (Ppm1h) from Rattus norvegicus (Rat).